The primary structure comprises 391 residues: Na(+)/H(+) antiporter NhaA (391 aa).

11 helical membrane passes run 14-34 (GGII…LGAT), 59-79 (MLLW…GLEV), 95-115 (AFPV…YLAF), 125-145 (GWAI…ALLG), 154-174 (IFLM…IALF), 180-200 (SILS…LNIF), 219-239 (VLKS…FIPL), 254-274 (VLHP…NAGV), 292-312 (IIAG…WLAL), 328-348 (IMAV…ISTL), and 357-377 (LIVW…FVGY).

It belongs to the NhaA Na(+)/H(+) (TC 2.A.33) antiporter family.

The protein resides in the cell inner membrane. It catalyses the reaction Na(+)(in) + 2 H(+)(out) = Na(+)(out) + 2 H(+)(in). Na(+)/H(+) antiporter that extrudes sodium in exchange for external protons. This Enterobacter sp. (strain 638) protein is Na(+)/H(+) antiporter NhaA.